Consider the following 915-residue polypeptide: Translation initiation factor IF-2 (915 aa).

The span at 83–94 (QSRRAVEKEQIL) shows a compositional bias: basic and acidic residues. Disordered stretches follow at residues 83 to 177 (QSRR…PEPP), 216 to 280 (EADR…KPAV), and 293 to 328 (ISGM…LLRE). Low complexity-rich tracts occupy residues 111–129 (VRAA…EAPS) and 137–164 (APAT…LSAP). The segment covering 165-177 (LPEPVPEPVPEPP) has biased composition (pro residues). Residues 293–305 (ISGMDDSSGTGSR) are compositionally biased toward polar residues. A compositionally biased stretch (basic and acidic residues) spans 314 to 328 (MEREREQEEADLLRE). The region spanning 412-582 (TRPPVVTIMG…LTEAEMRELK (171 aa)) is the tr-type G domain. Residues 421-428 (GHVDHGKT) form a G1 region. Position 421–428 (421–428 (GHVDHGKT)) interacts with GTP. Residues 446–450 (GITQH) are G2. A G3 region spans residues 468 to 471 (DTPG). GTP-binding positions include 468-472 (DTPGH) and 522-525 (NKMD). Residues 522 to 525 (NKMD) form a G4 region. A G5 region spans residues 558-560 (SAK).

This sequence belongs to the TRAFAC class translation factor GTPase superfamily. Classic translation factor GTPase family. IF-2 subfamily.

The protein resides in the cytoplasm. Functionally, one of the essential components for the initiation of protein synthesis. Protects formylmethionyl-tRNA from spontaneous hydrolysis and promotes its binding to the 30S ribosomal subunits. Also involved in the hydrolysis of GTP during the formation of the 70S ribosomal complex. This is Translation initiation factor IF-2 from Chlorobium luteolum (strain DSM 273 / BCRC 81028 / 2530) (Pelodictyon luteolum).